Here is a 605-residue protein sequence, read N- to C-terminus: Leucine-rich repeat-containing protein 40 (605 aa).

A disordered region spans residues 1-26 (MSRFRRGGKAPDPLSGFRAPKEQEPA). LRR repeat units follow at residues 83 to 104 (DLTKLILASNKLQLLSEDISLL), 106 to 127 (ALVVLDIHDNQIVSLPCAIKEL), 129 to 151 (NLQKLNISHNKIKQLPKELQHLQ), 152 to 173 (NLKSLLLQHNQLEELPDSIGHL), 175 to 196 (ILEELDVSNNCLRSISSSVGQL), 198 to 219 (GLVKFNLSSNKLTALPTEIGKM), 221 to 242 (NLKQLDCTSNLLENVPASVAGM), 244 to 265 (SLEQLYLRQNKLTYLPELPFLT), 266 to 287 (KLKELHVGNNQIQTLGPEHLQN), 290 to 311 (SLSVLELRYNKLKVLPEEISLL), 313 to 335 (GLERLDLSNNDLGSLPCTLGSLP), 336 to 357 (NLKSLQLEGNPLRGIRRDILNK), 429 to 450 (FITTVNFSKNQLTEVPARIVEM), 453 to 475 (SVCDVNLGFNKISSISLNLCMLL), 476 to 497 (KLTHIDMRNNVLTSLPSEMEAM), 499 to 520 (RLQSVILSFNRFKHFPDVLYRI), 522 to 543 (TLETILISSNQIGSIDPTQLIK), 546 to 567 (KLSTLDLQNNDLLQIPPALGNC), and 569 to 590 (SLRALHLEGNPFRNPRAAILAK).

The polypeptide is Leucine-rich repeat-containing protein 40 (lrrc40) (Xenopus tropicalis (Western clawed frog)).